We begin with the raw amino-acid sequence, 313 residues long: Inner membrane ABC transporter permease protein YdcU (313 aa).

The Cytoplasmic portion of the chain corresponds to 1–25 (MAMNVLQSPSRPGLGKVSGFFWHNP). Residues 26 to 46 (GLGLFLLLLGPLMWFGIVYFG) form a helical membrane-spanning segment. Over 47 to 92 (SLLTLLWQGFYTFDDFTMSVTPELTLANIRALFNPANYDIILRTLT) the chain is Periplasmic. The ABC transmembrane type-1 domain maps to 87 to 302 (ILRTLTMAVA…PIILIALYLA (216 aa)). Residues 93–113 (MAVAVTIASAILAFPMAWYMA) form a helical membrane-spanning segment. The Cytoplasmic segment spans residues 114 to 122 (RYTSGKMKA). The helical transmembrane segment at 123–143 (FFYIAVMLPMWASYIVKAYAW) threads the bilayer. The Periplasmic portion of the chain corresponds to 144–154 (TLLLAKDGVAQ). Residues 155–175 (WFLQHLGLEPLLTAFLTLPAV) form a helical membrane-spanning segment. The Cytoplasmic segment spans residues 176 to 187 (GGNTLSTSGLGR). A helical membrane pass occupies residues 188–208 (FLVFLYIWLPFMILPVQAALE). At 209–230 (RLPPSLLQASADLGARPRQTFR) the chain is on the periplasmic side. Residues 231–251 (YVVLPLAIPGIAAGSIFTFSL) form a helical membrane-spanning segment. Position 252 (T252) is a topological domain, cytoplasmic. Residues 253-273 (LGDFIVPQLVGPPGYFIGNMV) traverse the membrane as a helical segment. At 274–283 (YSQQGAIGNM) the chain is on the periplasmic side. Residues 284-304 (PMAAAFTLVPIILIALYLAFV) form a helical membrane-spanning segment. Residues 305-313 (KRLGAFDAL) lie on the Cytoplasmic side of the membrane.

It belongs to the binding-protein-dependent transport system permease family. CysTW subfamily.

The protein localises to the cell inner membrane. Functionally, probably part of the ABC transporter complex YdcSTUV. Probably responsible for the translocation of the substrate across the membrane. This Escherichia coli (strain K12) protein is Inner membrane ABC transporter permease protein YdcU (ydcU).